We begin with the raw amino-acid sequence, 241 residues long: Large ribosomal subunit protein uL3 (241 aa).

Disordered regions lie at residues 139-166 and 214-241; these read VSHR…PGHM and ADAP…QEGA. Gln151 carries the N5-methylglutamine modification. Positions 229–241 are enriched in low complexity; sequence AAAEAPAAEQEGA.

As to quaternary structure, part of the 50S ribosomal subunit. Forms a cluster with proteins L14 and L19. Methylated, on either Lys-155 or Lys-158. Post-translationally, methylated by PrmB.

Functionally, one of the primary rRNA binding proteins, it binds directly near the 3'-end of the 23S rRNA, where it nucleates assembly of the 50S subunit. The polypeptide is Large ribosomal subunit protein uL3 (Rhodopseudomonas palustris (strain ATCC BAA-98 / CGA009)).